The sequence spans 401 residues: Jumonji C domain-containing protein 5 (401 aa).

Positions Glu255–Glu401 constitute a JmjC domain. The Fe cation site is built by His306, Asp308, and His385.

Requires Fe(2+) as cofactor. Expressed in neurons close to the dorsal lateral neurons involved in circadian rhythm.

The protein localises to the nucleus. It localises to the nucleoplasm. It is found in the cytoplasm. It catalyses the reaction L-arginyl-[protein] + 2-oxoglutarate + O2 = (3R)-3-hydroxy-L-arginyl-[protein] + succinate + CO2. Bifunctional enzyme that acts both as an endopeptidase and 2-oxoglutarate-dependent monooxygenase. May be involved in regulation of behavior and circadian rhythms. In Drosophila melanogaster (Fruit fly), this protein is Jumonji C domain-containing protein 5.